Reading from the N-terminus, the 178-residue chain is ATP synthase subunit delta (178 aa).

This sequence belongs to the ATPase delta chain family. F-type ATPases have 2 components, F(1) - the catalytic core - and F(0) - the membrane proton channel. F(1) has five subunits: alpha(3), beta(3), gamma(1), delta(1), epsilon(1). F(0) has three main subunits: a(1), b(2) and c(10-14). The alpha and beta chains form an alternating ring which encloses part of the gamma chain. F(1) is attached to F(0) by a central stalk formed by the gamma and epsilon chains, while a peripheral stalk is formed by the delta and b chains.

The protein localises to the cell membrane. F(1)F(0) ATP synthase produces ATP from ADP in the presence of a proton or sodium gradient. F-type ATPases consist of two structural domains, F(1) containing the extramembraneous catalytic core and F(0) containing the membrane proton channel, linked together by a central stalk and a peripheral stalk. During catalysis, ATP synthesis in the catalytic domain of F(1) is coupled via a rotary mechanism of the central stalk subunits to proton translocation. Its function is as follows. This protein is part of the stalk that links CF(0) to CF(1). It either transmits conformational changes from CF(0) to CF(1) or is implicated in proton conduction. This is ATP synthase subunit delta from Streptococcus pyogenes serotype M49 (strain NZ131).